A 124-amino-acid chain; its full sequence is UPF0102 protein Msil_0293 (124 aa).

This sequence belongs to the UPF0102 family.

The protein is UPF0102 protein Msil_0293 of Methylocella silvestris (strain DSM 15510 / CIP 108128 / LMG 27833 / NCIMB 13906 / BL2).